The primary structure comprises 92 residues: Small ribosomal subunit protein uS19c (92 aa).

This sequence belongs to the universal ribosomal protein uS19 family.

It is found in the plastid. The protein localises to the chloroplast. Protein S19 forms a complex with S13 that binds strongly to the 16S ribosomal RNA. The polypeptide is Small ribosomal subunit protein uS19c (Rhodomonas salina (Cryptomonas salina)).